The sequence spans 445 residues: Chromosome partition protein MukF (445 aa).

Residues L213–I241 are leucine-zipper.

Belongs to the MukF family. Interacts, and probably forms a ternary complex, with MukE and MukB via its C-terminal region. The complex formation is stimulated by calcium or magnesium. It is required for an interaction between MukE and MukB.

The protein resides in the cytoplasm. It is found in the nucleoid. In terms of biological role, involved in chromosome condensation, segregation and cell cycle progression. May participate in facilitating chromosome segregation by condensation DNA from both sides of a centrally located replisome during cell division. Not required for mini-F plasmid partitioning. Probably acts via its interaction with MukB and MukE. Overexpression results in anucleate cells. It has a calcium binding activity. This is Chromosome partition protein MukF from Vibrio campbellii (strain ATCC BAA-1116).